A 274-amino-acid chain; its full sequence is Thiamine kinase (274 aa).

The protein belongs to the thiamine kinase family.

The catalysed reaction is thiamine + ATP = thiamine phosphate + ADP + H(+). It functions in the pathway cofactor biosynthesis; thiamine diphosphate biosynthesis; thiamine phosphate from thiamine: step 1/1. Catalyzes the ATP-dependent phosphorylation of thiamine to thiamine phosphate. Is involved in thiamine salvage. The chain is Thiamine kinase from Escherichia coli O45:K1 (strain S88 / ExPEC).